Consider the following 859-residue polypeptide: Active breakpoint cluster region-related protein (859 aa).

Residues alanine 31–glutamate 84 form a disordered region. Residues proline 54–serine 64 are compositionally biased toward polar residues. Phosphoserine is present on serine 57. The DH domain maps to methionine 91–aspartate 284. Residues glutamine 301–lysine 459 enclose the PH domain. Positions threonine 484 to isoleucine 613 constitute a C2 domain. In terms of domain architecture, Rho-GAP spans valine 647 to phenylalanine 845.

In terms of assembly, interacts with DLG4. In terms of tissue distribution, expressed in brain, including the cortex, hippocampus, cerebellum, and brainstem, as well as the spinal cord (at protein level).

It is found in the cell projection. The protein localises to the dendritic spine. It localises to the axon. The protein resides in the synapse. Protein with a unique structure having two opposing regulatory activities toward small GTP-binding proteins. The C-terminus is a GTPase-activating protein domain which stimulates GTP hydrolysis by RAC1, RAC2 and CDC42. Accelerates the intrinsic rate of GTP hydrolysis of RAC1 or CDC42, leading to down-regulation of the active GTP-bound form. The central Dbl homology (DH) domain functions as guanine nucleotide exchange factor (GEF) that modulates the GTPases CDC42, RHOA and RAC1. Promotes the conversion of CDC42, RHOA and RAC1 from the GDP-bound to the GTP-bound form. Functions as an important negative regulator of neuronal RAC1 activity. Regulates macrophage functions such as CSF-1 directed motility and phagocytosis through the modulation of RAC1 activity. The polypeptide is Active breakpoint cluster region-related protein (Rattus norvegicus (Rat)).